The sequence spans 322 residues: Malate dehydrogenase (322 aa).

Residues 10–15 (GSGQIG) and Asp-34 each bind NAD(+). Residues Arg-83 and Arg-89 each coordinate substrate. NAD(+)-binding positions include Asn-96 and 119 to 121 (ITN). Asn-121 and Arg-152 together coordinate substrate. His-176 serves as the catalytic Proton acceptor.

The protein belongs to the LDH/MDH superfamily. MDH type 3 family.

It catalyses the reaction (S)-malate + NAD(+) = oxaloacetate + NADH + H(+). Catalyzes the reversible oxidation of malate to oxaloacetate. The polypeptide is Malate dehydrogenase (Nitrobacter hamburgensis (strain DSM 10229 / NCIMB 13809 / X14)).